The primary structure comprises 376 residues: 26S proteasome non-ATPase regulatory subunit 13 (376 aa).

The 168-residue stretch at 171-338 (SYYKDALRFL…KRVHMTWVQP (168 aa)) folds into the PCI domain.

This sequence belongs to the proteasome subunit S11 family. Component of the 19S proteasome regulatory particle complex. The 26S proteasome consists of a 20S core particle (CP) and two 19S regulatory subunits (RP). The regulatory particle is made of a lid composed of 9 subunits including PSMD13, a base containing 6 ATPases and few additional components.

Component of the 26S proteasome, a multiprotein complex involved in the ATP-dependent degradation of ubiquitinated proteins. This complex plays a key role in the maintenance of protein homeostasis by removing misfolded or damaged proteins, which could impair cellular functions, and by removing proteins whose functions are no longer required. Therefore, the proteasome participates in numerous cellular processes, including cell cycle progression, apoptosis, or DNA damage repair. The protein is 26S proteasome non-ATPase regulatory subunit 13 (PSMD13) of Bos taurus (Bovine).